A 753-amino-acid chain; its full sequence is Glycerophosphodiester phosphodiesterase GDPDL6 (753 aa).

The first 17 residues, 1–17 (MLRFFILFSLFLHSSVA), serve as a signal peptide directing secretion. 2 consecutive GP-PDE domains span residues 41-339 (PAVV…SQSI) and 355-654 (ALVI…TRYL). 4 N-linked (GlcNAc...) asparagine glycosylation sites follow: Asn304, Asn516, Asn603, and Asn715. A disordered region spans residues 707 to 729 (PPVAKLASNGTEGGPPQTPPRSG). A helical transmembrane segment spans residues 731 to 751 (VAIAANLSLSLLAMMALGLLY).

The protein belongs to the glycerophosphoryl diester phosphodiesterase family. Expressed in flowers and siliques.

It localises to the membrane. The enzyme catalyses a sn-glycero-3-phosphodiester + H2O = an alcohol + sn-glycerol 3-phosphate + H(+). This chain is Glycerophosphodiester phosphodiesterase GDPDL6, found in Arabidopsis thaliana (Mouse-ear cress).